The following is a 396-amino-acid chain: Seminal vesicle major clotting proteins (396 aa).

A signal peptide spans 1-21 (MKSTIFFILSLLLMLENQAAG). Positions 45–178 (MEEAVSGSGL…ASSVDHRKKG (134 aa)) are disordered. Basic and acidic residues predominate over residues 60–152 (RGSDREESVG…RVSVRHERVE (93 aa)). SVP-3/-4 repeat repeat units follow at residues 65 to 88 (EESVGERVSLRQEEFEKGHIRSSV), 89 to 112 (EEPEGEHVSVRREHLEKSHIRHNV), and 113 to 136 (EEPEGERVSVRREHLEKSHIRHSA). One copy of the SVP-3/-4 repeat; truncated repeat lies at 137–157 (EEPEGERVSVRHERVEKTHKR). Positions 177 to 192 (KGHIRFKRQDPIAALA) are excised as a propeptide. SVP-1 clotting repeat units lie at residues 194–217 (IEGQDAVKDSLWVKGQASSEERFS), 218–241 (VKGQDLVKGHLQMKGQSSLAERFS), 242–265 (VTGQDSVKGRLQMKGQDTLAERFS), 266–289 (MTGQDSVKSRLQMKGQDSLSERFS), 290–313 (MTGQDSVKGRLQMKGQSSLAERFS), 314–337 (VTGQDSVKGRLQMKGKDTLAERFS), 338–361 (VTGQDSVKGRLQMKGHDLLEERFS), and 362–385 (VSGQDSVKGLARIKGQESVQSGFS). The interval 194–396 (IEGQDAVKDS…KGQGSLKGLI (203 aa)) is 9 X tandem repeats of SVP-1 like motif. The tract at residues 377-396 (QESVQSGFSVKGQGSLKGLI) is disordered. The stretch at 386–396 (VKGQGSLKGLI) is one SVP-1 clotting 9; truncated repeat.

To the SVP-2 precursor, particularly in regions where protein processing must occur. Post-translationally, SVP-3 may be a post-translationally modified form of SVP-4. In terms of processing, covalent clotting of SVP-1 is catalyzed by a transglutaminase secreted by the anterior prostate through the formation of gamma-glutamyl-epsilon-lysine cross-links. The conserved 2 Lys and 1 Gln residues per functional unit seem to be the residues involved in the formation of those cross-links.

Its subcellular location is the secreted. Its function is as follows. SVP-1 serves as substrate in the formation of the copulatory plug. SVP-3 and SVP-4 may also contribute to the clot. The sequence is that of Seminal vesicle major clotting proteins from Cavia porcellus (Guinea pig).